A 197-amino-acid chain; its full sequence is GCN5-related N-acetyltransferase 1, chloroplastic (197 aa).

Residues Met-1–Ala-37 constitute a chloroplast transit peptide. Polar residues predominate over residues Gln-23 to Thr-34. Positions Gln-23–Tyr-46 are disordered. An N-acetyltransferase domain is found at Phe-58–Asn-195. Acetyl-CoA-binding positions include Val-129–Val-131, Ser-137–Lys-142, Glu-165–Arg-167, and Tyr-172. The active-site Proton donor is Tyr-172.

Belongs to the acetyltransferase family. GNAT subfamily. In terms of assembly, oligomer. Autoacetylated. Expressed in green tissues. Accumulates mainly in flowers and young leaves, and, to a lower extent, in stems and mature leaves, but barely in roots.

The protein resides in the plastid. It is found in the chloroplast. It carries out the reaction an N-terminal L-alpha-aminoacyl-[protein] + acetyl-CoA = N-terminal N(alpha)-acetyl-L-alpha-aminoacyl-[protein] + CoA + H(+). The catalysed reaction is L-lysyl-[protein] + acetyl-CoA = N(6)-acetyl-L-lysyl-[protein] + CoA + H(+). It catalyses the reaction 5-methoxytryptamine + acetyl-CoA = melatonin + CoA + H(+). The enzyme catalyses serotonin + acetyl-CoA = N-acetylserotonin + CoA + H(+). With respect to regulation, inhibited by 5-methoxytryptamine in vitro. In terms of biological role, protein acetyltransferase with dual specificity triggering both N-alpha-acetylation (NTA) and epsilon-lysine acetylation (KA), possibly with a low efficiency or toward specific plastid substrates. Involved in melatonin biosynthesis by catalyzing the formation of N-acetylserotonin (NAS) from serotonin and of melatonin (N-acetyl-5-methoxytryptamine) from 5-methoxytryptamine (5-MT). This chain is GCN5-related N-acetyltransferase 1, chloroplastic, found in Arabidopsis thaliana (Mouse-ear cress).